The following is a 345-amino-acid chain: Phosphoribosylformylglycinamidine cyclo-ligase (345 aa).

This sequence belongs to the AIR synthase family.

The protein resides in the cytoplasm. The catalysed reaction is 2-formamido-N(1)-(5-O-phospho-beta-D-ribosyl)acetamidine + ATP = 5-amino-1-(5-phospho-beta-D-ribosyl)imidazole + ADP + phosphate + H(+). Its pathway is purine metabolism; IMP biosynthesis via de novo pathway; 5-amino-1-(5-phospho-D-ribosyl)imidazole from N(2)-formyl-N(1)-(5-phospho-D-ribosyl)glycinamide: step 2/2. The chain is Phosphoribosylformylglycinamidine cyclo-ligase from Shewanella denitrificans (strain OS217 / ATCC BAA-1090 / DSM 15013).